Here is a 58-residue protein sequence, read N- to C-terminus: Small ribosomal subunit protein eS27 (58 aa).

4 residues coordinate Zn(2+): cysteine 10, cysteine 13, cysteine 29, and cysteine 32. The segment at 10–32 adopts a C4-type zinc-finger fold; sequence CPDCEHEQVIFDHPSTIVKCIIC.

The protein belongs to the eukaryotic ribosomal protein eS27 family. As to quaternary structure, part of the 30S ribosomal subunit. It depends on Zn(2+) as a cofactor.

This chain is Small ribosomal subunit protein eS27, found in Archaeoglobus fulgidus (strain ATCC 49558 / DSM 4304 / JCM 9628 / NBRC 100126 / VC-16).